Reading from the N-terminus, the 299-residue chain is Taste receptor type 2 member 50 (299 aa).

Residue methionine 1 is a topological domain, extracellular. A helical membrane pass occupies residues 2–22 (ITFLYIFFSILIMVLFVLGNF). Topologically, residues 23–55 (ANGFIALVNFIDWVKRKKISSADQILTALAVSR) are cytoplasmic. The helical transmembrane segment at 56 to 76 (IGLLWTLLLNWYLTVLNPAFY) threads the bilayer. Over 77-87 (SVELRITSYNA) the chain is Extracellular. A helical transmembrane segment spans residues 88–108 (WVVTNHFSMWLAASLSIFYLL). The Cytoplasmic portion of the chain corresponds to 109 to 126 (KIANFSNLIFLHLKRRVR). A helical transmembrane segment spans residues 127–147 (SVILVILLGTLIFLVCHLLVA). At 148–181 (NMDESMWAEEYEGNITGKMKLRNTVHLSYLTVTT) the chain is on the extracellular side. Asparagine 161 carries an N-linked (GlcNAc...) asparagine glycan. The chain crosses the membrane as a helical span at residues 182–202 (LWSFIPFTLSLISFLMLICSL). Residues 203 to 229 (CKHLKKMQLHGEGSQDLSTKVHIKALQ) are Cytoplasmic-facing. A helical membrane pass occupies residues 230–250 (TLISFLLLCAIFFLFLIISVW). At 251–259 (SPRRLRNDP) the chain is on the extracellular side. The helical transmembrane segment at 260 to 280 (VVMVSKAVGNIYLAFDSFILI) threads the bilayer. Residues 281-299 (WRTKKLKHTFLLILCQIRC) are Cytoplasmic-facing.

The protein belongs to the G-protein coupled receptor T2R family.

The protein localises to the membrane. In terms of biological role, receptor that may play a role in the perception of bitterness and is gustducin-linked. May play a role in sensing the chemical composition of the gastrointestinal content. The activity of this receptor may stimulate alpha gustducin, mediate PLC-beta-2 activation and lead to the gating of TRPM5. This chain is Taste receptor type 2 member 50 (TAS2R50), found in Pan paniscus (Pygmy chimpanzee).